Reading from the N-terminus, the 278-residue chain is Putative cuticle collagen 91 (278 aa).

Disordered stretches follow at residues 84–109 (LAKNCPPGPPGPPGAPGAAGEPGVDG) and 140–278 (GPAG…SVRQ). The segment covering 89–98 (PPGPPGPPGA) has biased composition (pro residues). Triple-helical region regions lie at residues 91–120 (GPPGPPGAPGAAGEPGVDGDAGAAGIDGVA), 137–199 (GEAG…NGQR), and 202–264 (GTPG…PGPD). Positions 99–109 (PGAAGEPGVDG) are enriched in low complexity. The span at 158–167 (GADGQGGAPG) shows a compositional bias: gly residues. Low complexity-rich tracts occupy residues 172-228 (EGPA…AGAP) and 236-245 (APGVDGQPGA).

This sequence belongs to the cuticular collagen family. In terms of assembly, collagen polypeptide chains are complexed within the cuticle by disulfide bonds and other types of covalent cross-links.

Functionally, nematode cuticles are composed largely of collagen-like proteins. The cuticle functions both as an exoskeleton and as a barrier to protect the worm from its environment. This Caenorhabditis elegans protein is Putative cuticle collagen 91 (col-91).